We begin with the raw amino-acid sequence, 163 residues long: Large ribosomal subunit protein uL15 (163 aa).

Basic residues predominate over residues 1 to 29 (MSKKRRQRGSRTHGGGSHKNRRGAGHRGG). Disordered stretches follow at residues 1–59 (MSKK…KTRR) and 135–163 (VADG…DEES). Composition is skewed to basic and acidic residues over residues 33 to 46 (AGRD…HEPL) and 142 to 154 (LSER…AEKD).

Belongs to the universal ribosomal protein uL15 family. In terms of assembly, part of the 50S ribosomal subunit.

Binds to the 23S rRNA. The protein is Large ribosomal subunit protein uL15 of Natronomonas pharaonis (strain ATCC 35678 / DSM 2160 / CIP 103997 / JCM 8858 / NBRC 14720 / NCIMB 2260 / Gabara) (Halobacterium pharaonis).